The following is a 143-amino-acid chain: UPF0201 protein Pisl_1658 (143 aa).

This sequence belongs to the UPF0201 family.

The chain is UPF0201 protein Pisl_1658 from Pyrobaculum islandicum (strain DSM 4184 / JCM 9189 / GEO3).